A 301-amino-acid chain; its full sequence is Glutamyl-Q tRNA(Asp) synthetase (301 aa).

L-glutamate-binding positions include arginine 8 to serine 12 and glutamate 44. The 'HIGH' region signature appears at proline 11–serine 21. Zn(2+)-binding residues include cysteine 100, cysteine 102, tyrosine 122, and cysteine 126. 2 residues coordinate L-glutamate: tyrosine 180 and arginine 198. The 'KMSKS' region motif lies at lysine 236–glutamine 240. An ATP-binding site is contributed by lysine 239.

It belongs to the class-I aminoacyl-tRNA synthetase family. GluQ subfamily. Requires Zn(2+) as cofactor.

Its function is as follows. Catalyzes the tRNA-independent activation of glutamate in presence of ATP and the subsequent transfer of glutamate onto a tRNA(Asp). Glutamate is transferred on the 2-amino-5-(4,5-dihydroxy-2-cyclopenten-1-yl) moiety of the queuosine in the wobble position of the QUC anticodon. The chain is Glutamyl-Q tRNA(Asp) synthetase from Dechloromonas aromatica (strain RCB).